We begin with the raw amino-acid sequence, 146 residues long: Allograft inflammatory factor 1 (146 aa).

N-acetylserine is present on S1. Position 10 is an N6-acetyllysine (K10). S38 is subject to Phosphoserine. Residues 44–79 form the EF-hand 1 domain; it reads RKLEAFKQKYMEFDLNGNGDIDIMSLKRMLEKLGVP. Ca(2+)-binding residues include D57, N59, N61, D63, and T99. The region spanning 81 to 115 is the EF-hand 2; degenerate domain; it reads THLELKKLIKEVSSGSGETFSYSIFLKMMLGKRSA. A disordered region spans residues 127-146; it reads AREQEKPTGPPAKKAISELP.

As to quaternary structure, homodimer (Potential). Monomer. Interacts with LCP1. Microglial cells in the central nervous system and dendritic cells and macrophages in several organs.

The protein localises to the cytoplasm. It localises to the cytoskeleton. The protein resides in the cell projection. Its subcellular location is the ruffle membrane. It is found in the phagocytic cup. In terms of biological role, actin-binding protein that enhances membrane ruffling and RAC activation. Enhances the actin-bundling activity of LCP1. Binds calcium. Plays a role in RAC signaling and in phagocytosis. May play a role in macrophage activation and function. Promotes the proliferation of vascular smooth muscle cells and of T-lymphocytes. Enhances lymphocyte migration. Plays a role in vascular inflammation. Has a dual influence on glucose-induced insulin secretion: inhibition at low concentration and stimulation at high concentrations. This is Allograft inflammatory factor 1 (AIF1) from Sus scrofa (Pig).